Here is a 198-residue protein sequence, read N- to C-terminus: Snake venom metalloproteinase BpirMP (198 aa).

Residues 1 to 197 (TYIEVAVVAD…HNPQCILNEP (197 aa)) enclose the Peptidase M12B domain. The Ca(2+) site is built by Glu4 and Asp88. 3 cysteine pairs are disulfide-bonded: Cys112–Cys192, Cys152–Cys176, and Cys154–Cys159. Residue His137 participates in Zn(2+) binding. Glu138 is an active-site residue. His141 and His147 together coordinate Zn(2+). The Ca(2+) site is built by Cys192 and Asn195.

This sequence belongs to the venom metalloproteinase (M12B) family. P-I subfamily. In terms of assembly, monomer. The cofactor is Zn(2+). In terms of tissue distribution, expressed by the venom gland.

It is found in the secreted. With respect to regulation, inhibited by the chelating agents EDTA, EGTA and 1,10-phenanthroline. Is not inhibited by serine proteinase inhibitors aprotinin, leupeptin and benzamidine. Zinc metalloprotease that preferentially degrades Aalpha chain of fibrinogen (FGA) (at a dose of 5 ug, whereas at a dose of 10 ug, both FGA and FGB are completely degraded). Degrades fibrin gel in a dose-dependent manner, as well blood clots formed in vitro (thrombolytic activity). Induces hemorrhage (in the dorsal skin of mice), with an MHD of 50 ug. The basal membrane components collagen (all chains of type IV) (COL4A4), fibronectin (FN1), laminin and nidogen are all degraded by this toxin. This chain is Snake venom metalloproteinase BpirMP, found in Bothrops pirajai (Piraja's lancehead).